Reading from the N-terminus, the 480-residue chain is Protein nucleotidyltransferase YdiU (480 aa).

Residues G86, G88, R89, K109, D121, G122, R172, and R179 each contribute to the ATP site. Residue D248 is the Proton acceptor of the active site. Mg(2+) is bound by residues N249 and D258. D258 is an ATP binding site.

It belongs to the SELO family. Requires Mg(2+) as cofactor. The cofactor is Mn(2+).

The catalysed reaction is L-seryl-[protein] + ATP = 3-O-(5'-adenylyl)-L-seryl-[protein] + diphosphate. It catalyses the reaction L-threonyl-[protein] + ATP = 3-O-(5'-adenylyl)-L-threonyl-[protein] + diphosphate. It carries out the reaction L-tyrosyl-[protein] + ATP = O-(5'-adenylyl)-L-tyrosyl-[protein] + diphosphate. The enzyme catalyses L-histidyl-[protein] + UTP = N(tele)-(5'-uridylyl)-L-histidyl-[protein] + diphosphate. The catalysed reaction is L-seryl-[protein] + UTP = O-(5'-uridylyl)-L-seryl-[protein] + diphosphate. It catalyses the reaction L-tyrosyl-[protein] + UTP = O-(5'-uridylyl)-L-tyrosyl-[protein] + diphosphate. Nucleotidyltransferase involved in the post-translational modification of proteins. It can catalyze the addition of adenosine monophosphate (AMP) or uridine monophosphate (UMP) to a protein, resulting in modifications known as AMPylation and UMPylation. The chain is Protein nucleotidyltransferase YdiU from Salmonella schwarzengrund (strain CVM19633).